The sequence spans 563 residues: Methylcrotonoyl-CoA carboxylase beta chain, mitochondrial (563 aa).

A mitochondrion-targeting transit peptide spans Met-1 to Ala-22. The CoA carboxyltransferase N-terminal domain maps to Met-49–Pro-306. Residues Met-49–Arg-555 form a carboxyltransferase region. Lys-70 is subject to N6-acetyllysine; alternate. N6-succinyllysine; alternate is present on Lys-70. Position 141 is an N6-succinyllysine (Lys-141). The 247-residue stretch at Glu-309–Arg-555 folds into the CoA carboxyltransferase C-terminal domain. Residues Arg-343–Asn-372 are acyl-CoA binding. Position 433 is an N6-succinyllysine (Lys-433). Residue Lys-495 is modified to N6-acetyllysine; alternate. An N6-succinyllysine; alternate modification is found at Lys-495. N6-acetyllysine is present on Lys-511.

Belongs to the AccD/PCCB family. As to quaternary structure, probably a dodecamer composed of six biotin-containing alpha subunits (MCCC1) and six beta (MCCC2) subunits.

The protein localises to the mitochondrion matrix. The catalysed reaction is 3-methylbut-2-enoyl-CoA + hydrogencarbonate + ATP = 3-methyl-(2E)-glutaconyl-CoA + ADP + phosphate + H(+). Its pathway is amino-acid degradation; L-leucine degradation; (S)-3-hydroxy-3-methylglutaryl-CoA from 3-isovaleryl-CoA: step 2/3. Carboxyltransferase subunit of the 3-methylcrotonyl-CoA carboxylase, an enzyme that catalyzes the conversion of 3-methylcrotonyl-CoA to 3-methylglutaconyl-CoA, a critical step for leucine and isovaleric acid catabolism. In Rattus norvegicus (Rat), this protein is Methylcrotonoyl-CoA carboxylase beta chain, mitochondrial (Mccc2).